Consider the following 406-residue polypeptide: Bifunctional protein GlmU (406 aa).

The pyrophosphorylase stretch occupies residues 1-221; the sequence is MFIILAAGHG…EEEATGINSR (221 aa). Residues 5-8, K19, Q68, 73-74, 98-100, G134, E148, N162, and N219 contribute to the UDP-N-acetyl-alpha-D-glucosamine site; these read LAAG, GT, and YGD. D100 provides a ligand contact to Mg(2+). N219 contacts Mg(2+). The segment at 222–242 is linker; the sequence is NDLAKAEFYFQENRRKFFTDS. Positions 243–406 are N-acetyltransferase; the sequence is GVTLVAPETV…RRKQMVKKIK (164 aa). K308 contacts UDP-N-acetyl-alpha-D-glucosamine. Residue H320 is the Proton acceptor of the active site. Y323 and N334 together coordinate UDP-N-acetyl-alpha-D-glucosamine. Residues A337, 343–344, A380, and R397 each bind acetyl-CoA; that span reads NY.

The protein in the N-terminal section; belongs to the N-acetylglucosamine-1-phosphate uridyltransferase family. This sequence in the C-terminal section; belongs to the transferase hexapeptide repeat family. As to quaternary structure, homotrimer. Mg(2+) serves as cofactor.

It is found in the cytoplasm. The enzyme catalyses alpha-D-glucosamine 1-phosphate + acetyl-CoA = N-acetyl-alpha-D-glucosamine 1-phosphate + CoA + H(+). It catalyses the reaction N-acetyl-alpha-D-glucosamine 1-phosphate + UTP + H(+) = UDP-N-acetyl-alpha-D-glucosamine + diphosphate. It functions in the pathway nucleotide-sugar biosynthesis; UDP-N-acetyl-alpha-D-glucosamine biosynthesis; N-acetyl-alpha-D-glucosamine 1-phosphate from alpha-D-glucosamine 6-phosphate (route II): step 2/2. Its pathway is nucleotide-sugar biosynthesis; UDP-N-acetyl-alpha-D-glucosamine biosynthesis; UDP-N-acetyl-alpha-D-glucosamine from N-acetyl-alpha-D-glucosamine 1-phosphate: step 1/1. The protein operates within bacterial outer membrane biogenesis; LPS lipid A biosynthesis. Functionally, catalyzes the last two sequential reactions in the de novo biosynthetic pathway for UDP-N-acetylglucosamine (UDP-GlcNAc). The C-terminal domain catalyzes the transfer of acetyl group from acetyl coenzyme A to glucosamine-1-phosphate (GlcN-1-P) to produce N-acetylglucosamine-1-phosphate (GlcNAc-1-P), which is converted into UDP-GlcNAc by the transfer of uridine 5-monophosphate (from uridine 5-triphosphate), a reaction catalyzed by the N-terminal domain. The protein is Bifunctional protein GlmU of Wolbachia sp. subsp. Brugia malayi (strain TRS).